The following is a 303-amino-acid chain: Aspartate carbamoyltransferase catalytic subunit (303 aa).

Arginine 49 and threonine 50 together coordinate carbamoyl phosphate. L-aspartate is bound at residue lysine 77. 3 residues coordinate carbamoyl phosphate: arginine 99, histidine 126, and glutamine 129. L-aspartate-binding residues include arginine 159 and arginine 211. Residues serine 252 and proline 253 each contribute to the carbamoyl phosphate site.

The protein belongs to the aspartate/ornithine carbamoyltransferase superfamily. ATCase family. In terms of assembly, heterododecamer (2C3:3R2) of six catalytic PyrB chains organized as two trimers (C3), and six regulatory PyrI chains organized as three dimers (R2).

The enzyme catalyses carbamoyl phosphate + L-aspartate = N-carbamoyl-L-aspartate + phosphate + H(+). The protein operates within pyrimidine metabolism; UMP biosynthesis via de novo pathway; (S)-dihydroorotate from bicarbonate: step 2/3. Catalyzes the condensation of carbamoyl phosphate and aspartate to form carbamoyl aspartate and inorganic phosphate, the committed step in the de novo pyrimidine nucleotide biosynthesis pathway. The chain is Aspartate carbamoyltransferase catalytic subunit from Listeria monocytogenes serovar 1/2a (strain ATCC BAA-679 / EGD-e).